Reading from the N-terminus, the 346-residue chain is MASEQNPLGLLGIEFTEFATPDLDFMHKVFIDFGFSKLKKHKQKDIVYYKQNDINFLLNNEKQGFSAQFAKTHGPAISSMGWRVEDANFAFEGAVARGAKPAADEVKDLPYPAIYGIGDSLIYFIDTFGDDNNIYTSDFEALDEPIITQEKGFIEVDHLTNNVHKGTMEYWSNFYKDIFGFTEVRYFDIKGSQTALISYALRSPDGSFCIPINEGKGDDRNQIDEYLKEYDGPGVQHLAFRSRDIVASLDAMEGSSIQTLDIIPEYYDTIFEKLPQVTEDRDRIKHHQILVDGDEDGYLLQIFTKNLFGPIFIEIIQRKNNLGFGEGNFKALFESIERDQVRRGVL.

2 consecutive VOC domains span residues 12 to 141 and 155 to 305; these read GIEF…DFEA and EVDH…IFTK. Fe cation is bound by residues His158, His237, and Glu314.

The protein belongs to the 4HPPD family. Requires Fe cation as cofactor.

The protein resides in the cytoplasm. It participates in pigment biosynthesis; melanin biosynthesis. The sequence is that of Protein MelA (melA) from Shewanella colwelliana (Alteromonas colwelliana).